The sequence spans 55 residues: Large ribosomal subunit protein bL33 (55 aa).

This sequence belongs to the bacterial ribosomal protein bL33 family.

The chain is Large ribosomal subunit protein bL33 from Hyphomonas neptunium (strain ATCC 15444).